The sequence spans 388 residues: Pyruvate dehydrogenase E1 component subunit alpha, testis-specific form, mitochondrial (388 aa).

The transit peptide at 1–27 (MLAAFISRVLRRVAQKSARRVLVASRN) directs the protein to the mitochondrion. Pyruvate is bound by residues H90, Y116, R117, G163, V165, D194, G195, A196, N223, and Y225. Thiamine diphosphate-binding residues include Y116, R117, G163, V165, D194, G195, A196, and N223. D194 serves as a coordination point for Mg(2+). Mg(2+) is bound by residues N223 and Y225. H290 serves as a coordination point for thiamine diphosphate. Position 291 is a phosphoserine; by PDK1, PDK2, PDK3 and PDK4 (S291). Phosphoserine is present on S293. Phosphoserine; by PDK3 is present on S298.

Heterotetramer of two PDHA2 and two PDHB subunits. The heterotetramer interacts with DLAT, and is part of the multimeric pyruvate dehydrogenase complex that contains multiple copies of pyruvate dehydrogenase (E1), dihydrolipoamide acetyltransferase (DLAT, E2) and lipoamide dehydrogenase (DLD, E3). These subunits are bound to an inner core composed of about 48 DLAT and 12 PDHX molecules. It depends on thiamine diphosphate as a cofactor. The cofactor is Mg(2+). Phosphorylation at Ser-291, Ser-293 and Ser-298 by PDK family kinases inactivates the enzyme; for this phosphorylation at a single site is sufficient. Phosphorylation at Ser-293 interferes with access to active site, and thereby inactivates the enzyme. Dephosphorylation at all three sites, i.e. at Ser-291, Ser-293 and Ser-298, is required for reactivation. Testis. Expressed in postmeiotic spermatogenic cells.

It localises to the mitochondrion matrix. The enzyme catalyses N(6)-[(R)-lipoyl]-L-lysyl-[protein] + pyruvate + H(+) = N(6)-[(R)-S(8)-acetyldihydrolipoyl]-L-lysyl-[protein] + CO2. With respect to regulation, pyruvate dehydrogenase activity is inhibited by phosphorylation of PDHA2; it is reactivated by dephosphorylation. Its function is as follows. The pyruvate dehydrogenase complex catalyzes the overall conversion of pyruvate to acetyl-CoA and CO(2), and thereby links the glycolytic pathway to the tricarboxylic cycle. The protein is Pyruvate dehydrogenase E1 component subunit alpha, testis-specific form, mitochondrial (PDHA2) of Homo sapiens (Human).